A 1135-amino-acid polypeptide reads, in one-letter code: Glutamate receptor ionotropic, NMDA 3A (1135 aa).

Residues 1–23 (MRRLSLWWLLSRVCLLLPPPCAL) form the signal peptide. Over 24–674 (VLAGVPSSSS…PIGAFMWPLH (651 aa)) the chain is Extracellular. The interval 60–117 (TAPRAASRAQEGGRAGAQRDDPESGTWRPPAPSQGARWLGSALHGRGPPGSRKLGEGA) is disordered. Residues Asn145, Asn264, Asn275, Asn285, Asn296, Asn300, Asn426, Asn439, Asn549, and Asn565 are each glycosylated (N-linked (GlcNAc...) asparagine). 2 disulfide bridges follow: Cys537/Cys575 and Cys543/Cys576. Positions 631, 633, and 638 each coordinate glycine. The D-serine site is built by Ser633 and Arg638. The chain crosses the membrane as a helical span at residues 675–694 (WTMWLGIFVALHITAIFLTL). Topologically, residues 695 to 715 (YEWKSPFGMTPKGRNRNKVFS) are cytoplasmic. Positions 716 to 727 (FSSALNVCYALL) form an intramembrane region, discontinuously helical. The Cytoplasmic segment spans residues 728–741 (FGRTAAIKPPKCWT). A helical membrane pass occupies residues 742–761 (GRFLMNLWAIFCMFCLSTYT). At 762–932 (ANLAAVMVGE…TLQMGIKHFS (171 aa)) the chain is on the extracellular side. Glycine is bound at residue Ser801. 3 residues coordinate D-serine: Ser801, Ala802, and Asp845. Asp845 is a glycine binding site. A disulfide bridge connects residues Cys859 and Cys913. The N-linked (GlcNAc...) asparagine glycan is linked to Asn886. A helical transmembrane segment spans residues 933-948 (GLFVLLCIGFGLSILT). Residues 949–1135 (TIGEHIVHRL…YQKTNRTCES (187 aa)) are Cytoplasmic-facing. Positions 951 to 987 (GEHIVHRLLLPRIKNKSKLQYWLHTSQRFHRALNTSF) are PPP2CB binding site. The stretch at 1080-1129 (TTNGKADSLNVTRSSVIQELSELEKQIQVIRQELQLAVSRKTELEEYQKT) forms a coiled coil. A GIT1-binding region spans residues 1082-1115 (NGKADSLNVTRSSVIQELSELEKQIQVIRQELQL).

The protein belongs to the glutamate-gated ion channel (TC 1.A.10.1) family. NR3A/GRIN3A subfamily. In terms of assembly, heterotetramer. Forms heterotetrameric channels composed of two GluN1/zeta subunits (GRIN1), and two identical GluN3 subunits (GRIN3A or GRIN3B) (in vitro). Can also form heterotetrameric channels that contain at least two GluN1 subunits and at least a combination of one GluN2 and one GluN3 subunits (in vitro). Does not form functional homomeric channels. Found in a complex with GRIN1, GRIN2A or GRIN2B and PPP2CB. Probably interacts with PPP2CB. No complex with PPP2CB is detected when NMDARs are stimulated by NMDA. Interacts (via C-terminus) with GIT1, but not with GRIA1/GluA1, nor with synaptophysin/SYP; this interaction competes with GIT1 interaction with ARHGEF7/beta-PIX. In terms of processing, N-glycosylated. As to expression, isoform 1 and isoform 2 are expressed in olfactory bulb, frontal occipital, entorhinal and pyriform cortices, hippocampus, striatum, thalamus, cerebellum and spinal cord.

Its subcellular location is the cell membrane. It localises to the postsynaptic cell membrane. It is found in the postsynaptic density. It catalyses the reaction Ca(2+)(in) = Ca(2+)(out). The catalysed reaction is Na(+)(in) = Na(+)(out). With respect to regulation, excitatory glycine receptors are inhibited by D-serine at a concentrion of 10uM. In terms of biological role, component of a non-conventional N-methyl-D-aspartate (NMDA) receptors (NMDARs) that function as heterotetrameric, ligand-gated cation channels with low calcium permeability and low voltage-dependent block by Mg(2+). During the development of neural circuits, participates in the synaptic refinement period, restricting spine maturation and growth. Forms glutamatergic receptor complexes with GluN1 and GluN2 subunits which are activated by glycine binding to the GluN1 and GluN3 subunits and L-glutamate binding to GluN2 subunits. Forms excitatory glycinergic receptor complexes with GluN1 alone which are activated by glycine binding to the GluN1 and GluN3 subunits. GluN3A subunit also binds D-serine. Each GluN3 subunit confers differential attributes to channel properties, including activation, deactivation and desensitization kinetics, pH sensitivity, Ca2(+) permeability, and binding to allosteric modulators. By competing with GIT1 interaction with ARHGEF7/beta-PIX, may reduce GIT1/ARHGEF7-regulated local activation of RAC1, hence affecting signaling and limiting the maturation and growth of inactive synapses. The polypeptide is Glutamate receptor ionotropic, NMDA 3A (Rattus norvegicus (Rat)).